Reading from the N-terminus, the 132-residue chain is Small ribosomal subunit protein uS11 (132 aa).

The protein belongs to the universal ribosomal protein uS11 family. In terms of assembly, part of the 30S ribosomal subunit.

Located on the platform of the 30S subunit. The sequence is that of Small ribosomal subunit protein uS11 from Thermoplasma volcanium (strain ATCC 51530 / DSM 4299 / JCM 9571 / NBRC 15438 / GSS1).